We begin with the raw amino-acid sequence, 401 residues long: Adaptive-response sensory kinase SasA (401 aa).

One can recognise a Histidine kinase domain in the interval 175–400 (MLVHDLRNPL…WFHFTLPVYP (226 aa)). At histidine 178 the chain carries Phosphohistidine; by autocatalysis.

As to quaternary structure, homooligomerizes. Interacts with KaiC. Participates in the KaiABC clock complex, whose core is composed of a KaiC homohexamer, 6 KaiB and up to 6 KaiA dimers. SasA and KaiB(fs) compete to bind to KaiC.

It catalyses the reaction ATP + protein L-histidine = ADP + protein N-phospho-L-histidine.. Its function is as follows. Member of the two-component regulatory system SasA/RpaA involved in genome-wide circadian gene expression. One of several clock output pathways. Participates in the Kai clock protein complex, the main circadian regulator in cyanobacteria, via its interaction with KaiC. KaiC enhances the autophosphorylation activity of SasA, which then transfers its phosphate group to RpaA to activate it. In addition to its output function, recruits fold-shifted KaiB (KaiB(fs)) to KaiC to cooperatively form the KaiB(6):KaiC(6) complex (independent of SasA kinase activity). Required for robustness of the circadian rhythm of gene expression and is involved in clock output, also required for adaptation to light/dark cycles. This Trichormus variabilis (strain ATCC 29413 / PCC 7937) (Anabaena variabilis) protein is Adaptive-response sensory kinase SasA.